The sequence spans 196 residues: Nodulation protein A (196 aa).

The protein belongs to the NodA family.

The protein resides in the cytoplasm. In terms of biological role, N-acyltransferase required for nodulation. Acts in the production of a small, heat-stable compound (Nod) that stimulates mitosis in various plant protoplasts. This Mesorhizobium plurifarium protein is Nodulation protein A.